The primary structure comprises 274 residues: Shikimate kinase (274 aa).

86-96 (PVGKGLKSSSA) contributes to the ATP binding site.

It belongs to the GHMP kinase family. Archaeal shikimate kinase subfamily.

The protein resides in the cytoplasm. It carries out the reaction shikimate + ATP = 3-phosphoshikimate + ADP + H(+). Its pathway is metabolic intermediate biosynthesis; chorismate biosynthesis; chorismate from D-erythrose 4-phosphate and phosphoenolpyruvate: step 5/7. The chain is Shikimate kinase (aroK) from Pyrococcus abyssi (strain GE5 / Orsay).